Consider the following 342-residue polypeptide: NADPH-dependent methylglyoxal reductase GRE2 (342 aa).

Residues 7 to 12, Arg-32, Lys-36, 57 to 58, Tyr-165, Lys-169, Val-199, and Ser-216 contribute to the NADP(+) site; these read GANGFI and DI. Lys-169 (proton donor) is an active-site residue. Ser-333 bears the Phosphoserine mark.

Belongs to the NAD(P)-dependent epimerase/dehydratase family. Dihydroflavonol-4-reductase subfamily. In terms of assembly, monomer. Post-translationally, the N-terminus is blocked.

It is found in the cytoplasm. The protein resides in the nucleus. It catalyses the reaction (S)-lactaldehyde + NADP(+) = methylglyoxal + NADPH + H(+). The enzyme catalyses 3-methylbutanol + NADP(+) = 3-methylbutanal + NADPH + H(+). It carries out the reaction 2,5-hexanedione + 2 NADPH + 2 H(+) = (2S,5S)-hexanediol + 2 NADP(+). The catalysed reaction is (S)-3-chloro-1-phenyl-1-propanol + NADP(+) = 3-chloro-1-phenyl-1-propanone + NADPH + H(+). Its activity is regulated as follows. Activated by glutathione. Its function is as follows. Catalyzes the irreversible reduction of the cytotoxic compound methylglyoxal (MG, 2-oxopropanal) to (S)-lactaldehyde as an alternative to detoxification of MG by glyoxalase I GLO1. MG is synthesized via a bypath of glycolysis from dihydroxyacetone phosphate and is believed to play a role in cell cycle regulation and stress adaptation. Also catalyzes the reduction of 3-methylbutanal to 3-methylbutanol. Acts as a suppressor of 3-methylbutanol-induced filamentation by modulating the levels of 3-methylbutanal, the signal to which cells respond by filamentation. Also involved in ergosterol metabolism. In Saccharomyces cerevisiae (strain ATCC 204508 / S288c) (Baker's yeast), this protein is NADPH-dependent methylglyoxal reductase GRE2 (GRE2).